Reading from the N-terminus, the 127-residue chain is Glycine cleavage system H protein (127 aa).

One can recognise a Lipoyl-binding domain in the interval 24-105 (TALVGITDFA…YGEGWMVKMK (82 aa)). Lysine 65 is subject to N6-lipoyllysine.

This sequence belongs to the GcvH family. The glycine cleavage system is composed of four proteins: P, T, L and H. It depends on (R)-lipoate as a cofactor.

The glycine cleavage system catalyzes the degradation of glycine. The H protein shuttles the methylamine group of glycine from the P protein to the T protein. In Chlorobium phaeovibrioides (strain DSM 265 / 1930) (Prosthecochloris vibrioformis (strain DSM 265)), this protein is Glycine cleavage system H protein.